Reading from the N-terminus, the 174-residue chain is MMMIMGRKCEDCGNQAKKDCVYMRCRTCCKSKAFHCQTHIKSTWVPAYRRSHHKHQSQPLSTSIPKGVQIHTTPGHFPAELSSLADFRCVKVSSIDDGKEQYAYQTTVNIGGHVFRGILHDQGLHKVMVDHHYNKNSNNHQELLTPSTSSCPLKITSPFTDFMFGTRFSSVLRR.

Zn(2+)-binding residues include cysteine 9, cysteine 12, cysteine 20, cysteine 25, cysteine 29, and cysteine 36. Residues 9–36 constitute a DNA-binding region (zn(2)-C6 fungal-type; degenerate); it reads CEDCGNQAKKDCVYMRCRTCCKSKAFHC. The short motif at 110-113 is the Required for homo- and heterodimerization element; that stretch reads IGGH.

This sequence belongs to the SHI protein family.

The protein localises to the nucleus. Functionally, transcription activator that binds DNA on 5'-ACTCTAC-3' and promotes auxin homeostasis-regulating gene expression (e.g. YUC genes), as well as genes affecting stamen development, cell expansion and timing of flowering. Synergistically with other SHI-related proteins, regulates gynoecium, stamen and leaf development in a dose-dependent manner, controlling apical-basal patterning. Promotes style and stigma formation, and influences vascular development during gynoecium development. May also have a role in the formation and/or maintenance of the shoot apical meristem (SAM). In Arabidopsis thaliana (Mouse-ear cress), this protein is Protein SHI RELATED SEQUENCE 3 (SRS3).